The following is a 507-amino-acid chain: Carboxypeptidase sxa2 (507 aa).

Positions 1-22 are cleaved as a signal peptide; the sequence is MLSLFLKSLFAIIIIELTIIHA. Asn-38 and Asn-45 each carry an N-linked (GlcNAc...) asparagine glycan. The disordered stretch occupies residues 41–64; the sequence is SASSNQTVQPRQHAAPSSDRIKSL. Ser-200 is a catalytic residue. 3 N-linked (GlcNAc...) asparagine glycosylation sites follow: Asn-259, Asn-260, and Asn-300. Asp-434 is an active-site residue. An N-linked (GlcNAc...) asparagine glycan is attached at Asn-448. Residue His-487 is part of the active site.

Belongs to the peptidase S10 family.

It is found in the secreted. Its function is as follows. Involved in degradation or processing of the mating pheromones. Its loss causes a persistent response to the pheromones. It may be required for stabilization of enzymes that are essential for zygote formation. May degrade the mating pheromone P-factor. The polypeptide is Carboxypeptidase sxa2 (sxa2) (Schizosaccharomyces pombe (strain 972 / ATCC 24843) (Fission yeast)).